The primary structure comprises 374 residues: Queuine tRNA-ribosyltransferase (374 aa).

The active-site Proton acceptor is Asp89. Residues 89–93, Asp143, Gln187, and Gly214 contribute to the substrate site; that span reads DSGGF. The RNA binding stretch occupies residues 245 to 251; it reads GVGKPED. The Nucleophile role is filled by Asp264. The RNA binding; important for wobble base 34 recognition stretch occupies residues 269–273; the sequence is TRNAR. Cys302, Cys304, Cys307, and His333 together coordinate Zn(2+).

Belongs to the queuine tRNA-ribosyltransferase family. In terms of assembly, homodimer. Within each dimer, one monomer is responsible for RNA recognition and catalysis, while the other monomer binds to the replacement base PreQ1. Zn(2+) is required as a cofactor.

It catalyses the reaction 7-aminomethyl-7-carbaguanine + guanosine(34) in tRNA = 7-aminomethyl-7-carbaguanosine(34) in tRNA + guanine. It functions in the pathway tRNA modification; tRNA-queuosine biosynthesis. Functionally, catalyzes the base-exchange of a guanine (G) residue with the queuine precursor 7-aminomethyl-7-deazaguanine (PreQ1) at position 34 (anticodon wobble position) in tRNAs with GU(N) anticodons (tRNA-Asp, -Asn, -His and -Tyr). Catalysis occurs through a double-displacement mechanism. The nucleophile active site attacks the C1' of nucleotide 34 to detach the guanine base from the RNA, forming a covalent enzyme-RNA intermediate. The proton acceptor active site deprotonates the incoming PreQ1, allowing a nucleophilic attack on the C1' of the ribose to form the product. After dissociation, two additional enzymatic reactions on the tRNA convert PreQ1 to queuine (Q), resulting in the hypermodified nucleoside queuosine (7-(((4,5-cis-dihydroxy-2-cyclopenten-1-yl)amino)methyl)-7-deazaguanosine). The polypeptide is Queuine tRNA-ribosyltransferase (Photorhabdus laumondii subsp. laumondii (strain DSM 15139 / CIP 105565 / TT01) (Photorhabdus luminescens subsp. laumondii)).